A 375-amino-acid polypeptide reads, in one-letter code: Succinyl-diaminopimelate desuccinylase (375 aa).

Position 66 (H66) interacts with Zn(2+). D68 is an active-site residue. D99 is a binding site for Zn(2+). Residue E133 is the Proton acceptor of the active site. Residues E134, E162, and H348 each coordinate Zn(2+).

The protein belongs to the peptidase M20A family. DapE subfamily. Homodimer. The cofactor is Zn(2+). Co(2+) serves as cofactor.

It catalyses the reaction N-succinyl-(2S,6S)-2,6-diaminopimelate + H2O = (2S,6S)-2,6-diaminopimelate + succinate. The protein operates within amino-acid biosynthesis; L-lysine biosynthesis via DAP pathway; LL-2,6-diaminopimelate from (S)-tetrahydrodipicolinate (succinylase route): step 3/3. Functionally, catalyzes the hydrolysis of N-succinyl-L,L-diaminopimelic acid (SDAP), forming succinate and LL-2,6-diaminopimelate (DAP), an intermediate involved in the bacterial biosynthesis of lysine and meso-diaminopimelic acid, an essential component of bacterial cell walls. This chain is Succinyl-diaminopimelate desuccinylase, found in Salmonella typhi.